The following is a 463-amino-acid chain: Cytidylate cyclase (463 aa).

The 110-residue stretch at 122–231 (VTMFMDIIGS…IGIRIGIDLG (110 aa)) folds into the Guanylate cyclase domain. Phe125 lines the a ribonucleoside 5'-triphosphate pocket. Residues Asp127, Ile128, and Asp171 each contribute to the Mn(2+) site. Residues 334–454 (KPSRIKVVIS…VISNDTVIER (121 aa)) form an AGS-C domain region.

It belongs to the adenylyl cyclase class-4/guanylyl cyclase family. Pyrimidine cyclase subfamily. In terms of assembly, homodimer. It depends on Mn(2+) as a cofactor.

Its subcellular location is the cytoplasm. The catalysed reaction is CTP = 3',5'-cyclic CMP + diphosphate. In terms of biological role, pycsar (pyrimidine cyclase system for antiphage resistance) provides immunity against bacteriophage. The pyrimidine cyclase (PycC) synthesizes cyclic nucleotides in response to infection; these serve as specific second messenger signals. The signal activates the adjacent effector, leading to bacterial cell death and abortive phage infection. A clade E Pycsar system. Functionally, the pyrimidine cyclase gene of a two-gene Pycsar system, generates cyclic CMP (cCMP) from CTP in response to bacteriophage infection. Has little to no activity on ATP, GTP or UTP. Expression of this and adjacent effector Ec303145PycTM (AC P0DV27) confers resistance to bacteriophage P1, T5, lambda-vir and phi27. The sequence is that of Cytidylate cyclase from Escherichia coli.